The primary structure comprises 50 residues: Photosystem II reaction center protein M (50 aa).

Residues G7–I27 traverse the membrane as a helical segment.

Belongs to the PsbM family. In terms of assembly, PSII is composed of 1 copy each of membrane proteins PsbA, PsbB, PsbC, PsbD, PsbE, PsbF, PsbH, PsbI, PsbJ, PsbK, PsbL, PsbM, PsbT, PsbX, PsbY, Psb30/Ycf12, peripheral proteins PsbO, CyanoQ (PsbQ), PsbU, PsbV and a large number of cofactors. It forms dimeric complexes.

Its subcellular location is the cellular thylakoid membrane. In terms of biological role, one of the components of the core complex of photosystem II (PSII). PSII is a light-driven water:plastoquinone oxidoreductase that uses light energy to abstract electrons from H(2)O, generating O(2) and a proton gradient subsequently used for ATP formation. It consists of a core antenna complex that captures photons, and an electron transfer chain that converts photonic excitation into a charge separation. This subunit is found at the monomer-monomer interface. The sequence is that of Photosystem II reaction center protein M from Prochlorococcus marinus (strain MIT 9301).